Consider the following 829-residue polypeptide: Periplasmic nitrate reductase (829 aa).

Positions 1 to 31 (MKLSRRDFMKANAVAAAAAAAGLTIPTVARA) form a signal peptide, tat-type signal. The 4Fe-4S Mo/W bis-MGD-type domain occupies 40 to 96 (ITWDKAPCRFCGTGCGVLVGTQNGRIVASQGDPDAPVNRGLNCIKGYFLPKIMYGKD). Residues Cys47, Cys50, Cys54, and Cys82 each contribute to the [4Fe-4S] cluster site. Mo-bis(molybdopterin guanine dinucleotide) contacts are provided by residues Lys84, Gln151, Asn176, Cys180, 213-220 (WGSNMAEM), 263-265 (QSD), Met373, Gln377, Asn483, 509-510 (SD), Lys532, Asp559, and 719-728 (TGRVLEHWHT). Substrate is bound at residue Phe795. Mo-bis(molybdopterin guanine dinucleotide)-binding residues include Asn803 and Lys820.

It belongs to the prokaryotic molybdopterin-containing oxidoreductase family. NasA/NapA/NarB subfamily. In terms of assembly, component of the periplasmic nitrate reductase NapAB complex composed of NapA and NapB. It depends on [4Fe-4S] cluster as a cofactor. Mo-bis(molybdopterin guanine dinucleotide) serves as cofactor. Post-translationally, predicted to be exported by the Tat system. The position of the signal peptide cleavage has not been experimentally proven.

Its subcellular location is the periplasm. It catalyses the reaction 2 Fe(II)-[cytochrome] + nitrate + 2 H(+) = 2 Fe(III)-[cytochrome] + nitrite + H2O. In terms of biological role, catalytic subunit of the periplasmic nitrate reductase complex NapAB. Receives electrons from NapB and catalyzes the reduction of nitrate to nitrite. The sequence is that of Periplasmic nitrate reductase from Edwardsiella ictaluri (strain 93-146).